The chain runs to 563 residues: IQCJ-SCHIP1 readthrough transcript protein (563 aa).

In terms of domain architecture, IQ spans 47-67; sequence ESKVKIIQRAWREYLQRQEPL. Disordered regions lie at residues 63–150, 164–295, 312–336, and 384–430; these read RQEP…VSAL, VIDE…EPPV, FREQEVRNQGQARTNSTSAQKNERE, and SGSD…SLDD. Positions 76-87 are enriched in low complexity; the sequence is SVSSEKLSSSVS. Polar residues predominate over residues 88-97; the sequence is MNTFSDSSTP. Low complexity predominate over residues 108–143; that stretch reads SDAGSSSSSSRASSQSNSTKVTPCSECKSSSSPGGS. A compositionally biased stretch (acidic residues) spans 168–182; that stretch reads WAPEEDGEEEEEEDE. Composition is skewed to basic and acidic residues over residues 183-199 and 229-238; these read RDQRGYRDDRSPAREPG and HQHDPQDLRH. Ser193 bears the Phosphoserine mark. Residues 318–331 are compositionally biased toward polar residues; it reads RNQGQARTNSTSAQ. Basic and acidic residues predominate over residues 385-399; the sequence is GSDKDSDADDSKTET. The span at 400-411 shows a compositional bias: polar residues; sequence SLDTPLSPMSKQ. The required for interaction with ankyrins stretch occupies residues 419-563; that stretch reads DTTEEESESL…KHMAEKMPAK (145 aa). A compositionally biased stretch (acidic residues) spans 420-430; sequence TTEEESESLDD. The stretch at 500 to 534 forms a coiled coil; it reads IGQLQVIVNDLHSQIESLNEELVQLLLIRDELHTE.

As to quaternary structure, homooligomer (via coiled coil domain). Interacts (via IQ domain) with calmodulin; the interaction is direct and lost in presence of calcium. Interacts with ANK3 (via ANK repeats); required for localization at axon initial segments (AIS) and nodes of Ranvier. Interacts with SPTBN4. Interacts with KCNQ2 and KCNQ3. In terms of tissue distribution, highly expressed in brain and to a lower extent in heart and kidney.

It localises to the cell projection. It is found in the axon. Its subcellular location is the cytoplasm. May play a role in action potential conduction in myelinated cells through the organization of molecular complexes at nodes of Ranvier and axon initial segments. May also play a role in axon outgrowth and guidance. In Homo sapiens (Human), this protein is IQCJ-SCHIP1 readthrough transcript protein.